The chain runs to 91 residues: Probable Fe(2+)-trafficking protein (91 aa).

The protein belongs to the Fe(2+)-trafficking protein family. As to quaternary structure, monomer.

Could be a mediator in iron transactions between iron acquisition and iron-requiring processes, such as synthesis and/or repair of Fe-S clusters in biosynthetic enzymes. The sequence is that of Probable Fe(2+)-trafficking protein from Escherichia coli O7:K1 (strain IAI39 / ExPEC).